The sequence spans 349 residues: N-formyl peptide receptor 3 (349 aa).

Topologically, residues 1 to 27 are extracellular; that stretch reads METNFSIPLNESEEVLPEPAGHTVLWI. Residues N4 and N10 are each glycosylated (N-linked (GlcNAc...) asparagine). The chain crosses the membrane as a helical span at residues 28 to 50; it reads FSLLVHGVTFIFGVLGNGLVIWV. The Cytoplasmic portion of the chain corresponds to 51–61; the sequence is AGFRMTRTVNT. The chain crosses the membrane as a helical span at residues 62–83; that stretch reads ICYLNLALADFSFSAILPFRMV. Topologically, residues 84–100 are extracellular; sequence SVAMREKWPFGTFLCKL. C98 and C176 form a disulfide bridge. The helical transmembrane segment at 101 to 121 threads the bilayer; sequence VHVMIDINLFVSVYLITIIAL. Residues 122–140 are Cytoplasmic-facing; the sequence is DRCICVLHPAWAQNHRTMS. The helical transmembrane segment at 141–162 threads the bilayer; it reads LAKRVMMGLWILAIVLTLPNFI. At 163–205 the chain is on the extracellular side; it reads FWTTISTKNGDTYCIFNFPFWGDTAVERLNAFITMGKVFLILH. Residues 206-226 form a helical membrane-spanning segment; it reads FIIGFSMPMSIITVCYGIIAA. Over 227-242 the chain is Cytoplasmic; it reads KIHRNHMIKSSSPLRV. The helical transmembrane segment at 243 to 266 threads the bilayer; it reads FAAVVASFFICWFPYELIGILMAV. Over 267-286 the chain is Extracellular; the sequence is WLKEMLLNGKYKIILVLLNP. A helical membrane pass occupies residues 287-306; the sequence is TSSLAFFNSCLNPILYVFLG. Over 307–349 the chain is Cytoplasmic; that stretch reads SNFQERLIRSLPTSLERALTEVPDSAQTSNTHTNSASPPEETE. The tract at residues 328-349 is disordered; that stretch reads VPDSAQTSNTHTNSASPPEETE. Polar residues predominate over residues 331 to 343; sequence SAQTSNTHTNSAS.

This sequence belongs to the G-protein coupled receptor 1 family.

It is found in the cell membrane. Its function is as follows. Low affinity receptor for N-formyl-methionyl peptides, which are powerful neutrophils chemotactic factors. Binding of FMLP to the receptor causes activation of neutrophils. This response is mediated via a G-protein that activates a phosphatidylinositol-calcium second messenger system. This is N-formyl peptide receptor 3 (FPR3) from Pongo pygmaeus (Bornean orangutan).